Reading from the N-terminus, the 293-residue chain is MSNYWLNIYKPGGISSAKLVSMVKQILGKKVKVGHAGTLDVEAEGILPIAVGEATKLIQLLIDSRKTYIFTIKFGLQTDSGDYTGTVIATKNYIPSQEEAYTVCSKFIGKVTQIPPAFSALKVNGVRAYKFAREGKEVELKPRNITIYNLKCLNFDKKNAIAIYYTECSKGTYIRTLAEDLALSLQSLGFVIELRRTQVGIFKAENAIRIKSPDEITKSFLEEKSIKIEAILDDILVLDATDSQAQQIKYGQKCIFDYEDDISLLWVRYKGTLLAIGSLNKNCFNSLRVFNVL.

Asp-40 acts as the Nucleophile in catalysis.

Belongs to the pseudouridine synthase TruB family. Type 1 subfamily.

It catalyses the reaction uridine(55) in tRNA = pseudouridine(55) in tRNA. Functionally, responsible for synthesis of pseudouridine from uracil-55 in the psi GC loop of transfer RNAs. This is tRNA pseudouridine synthase B from Rickettsia akari (strain Hartford).